The primary structure comprises 184 residues: Large ribosomal subunit protein uL6 (184 aa).

The protein belongs to the universal ribosomal protein uL6 family. In terms of assembly, part of the 50S ribosomal subunit.

Functionally, this protein binds to the 23S rRNA, and is important in its secondary structure. It is located near the subunit interface in the base of the L7/L12 stalk, and near the tRNA binding site of the peptidyltransferase center. The sequence is that of Large ribosomal subunit protein uL6 from Cytophaga hutchinsonii (strain ATCC 33406 / DSM 1761 / CIP 103989 / NBRC 15051 / NCIMB 9469 / D465).